The chain runs to 385 residues: MAEAGVAAASLFGADRRLCSADILPPAEVRARIEVAVLNFLAALTDPAAPAISALPLISRGAANRGLRRALLRDDVSSVYLSYASCKRSLTRANDAKAFVRVWKVMEMCYKILGEGKLVTLRELFYTLLSESPTYFTCQRHVNQTVQDVVSLLRCTRQSLGIMASSRGALIGRLVVQGPEEEHVDCSILGPSGHAITGDLNVLSKLIFSSDARYIIVVEKDAIFQRLAEDRIYSHLPCILITAKGYPDLATRFILHRLSQTYPNMPIFALVDWNPAGLAILCTYKYGSISMGLESYRYACNVKWLGLRGDDLQLIPQSAYQELKPRDLQIAKSLLSSKFLQDKHRAELTLMLETGKRAEIEALYSHGFDFLGKYVARKIVQGDYI.

Residues 24–169 enclose the Topo IIA-type catalytic domain; sequence LPPAEVRARI…LGIMASSRGA (146 aa). The active-site O-(5'-phospho-DNA)-tyrosine intermediate is the Tyr-126. Mg(2+)-binding residues include Glu-219 and Asp-272.

Belongs to the TOP6A family. Interacts with TOP6B. It depends on Mg(2+) as a cofactor.

The protein localises to the nucleus. It catalyses the reaction ATP-dependent breakage, passage and rejoining of double-stranded DNA.. In terms of biological role, required for meiotic recombination. Mediates DNA cleavage that forms the double-strand breaks (DSB) that initiate meiotic recombination. In Oryza sativa subsp. japonica (Rice), this protein is Meiotic recombination protein SPO11-2 (SPO11-2).